We begin with the raw amino-acid sequence, 195 residues long: Imidazoleglycerol-phosphate dehydratase (195 aa).

Belongs to the imidazoleglycerol-phosphate dehydratase family.

Its subcellular location is the cytoplasm. The enzyme catalyses D-erythro-1-(imidazol-4-yl)glycerol 3-phosphate = 3-(imidazol-4-yl)-2-oxopropyl phosphate + H2O. Its pathway is amino-acid biosynthesis; L-histidine biosynthesis; L-histidine from 5-phospho-alpha-D-ribose 1-diphosphate: step 6/9. The protein is Imidazoleglycerol-phosphate dehydratase of Cupriavidus taiwanensis (strain DSM 17343 / BCRC 17206 / CCUG 44338 / CIP 107171 / LMG 19424 / R1) (Ralstonia taiwanensis (strain LMG 19424)).